A 336-amino-acid chain; its full sequence is HTH-type transcriptional regulator SyrM (336 aa).

In terms of domain architecture, HTH lysR-type spans 41 to 98 (IDLNLLVALEALLEYRNVTHAGQHIGRSQPAMSRALGRLRGLFNDDLLVRSSTGLIPT). The H-T-H motif DNA-binding region spans 58–77 (VTHAGQHIGRSQPAMSRALG).

Belongs to the LysR transcriptional regulatory family.

Its function is as follows. Acts in trans to stimulate nod gene expression via nodD3 and exo gene expression via SyrA. In Rhizobium etli, this protein is HTH-type transcriptional regulator SyrM (syrM).